A 196-amino-acid polypeptide reads, in one-letter code: ATP-dependent Clp protease proteolytic subunit (196 aa).

Residue serine 101 is the Nucleophile of the active site. Histidine 126 is a catalytic residue.

It belongs to the peptidase S14 family. Component of the chloroplastic Clp protease core complex.

The protein localises to the plastid. It localises to the chloroplast stroma. The catalysed reaction is Hydrolysis of proteins to small peptides in the presence of ATP and magnesium. alpha-casein is the usual test substrate. In the absence of ATP, only oligopeptides shorter than five residues are hydrolyzed (such as succinyl-Leu-Tyr-|-NHMec, and Leu-Tyr-Leu-|-Tyr-Trp, in which cleavage of the -Tyr-|-Leu- and -Tyr-|-Trp bonds also occurs).. Functionally, cleaves peptides in various proteins in a process that requires ATP hydrolysis. Has a chymotrypsin-like activity. Plays a major role in the degradation of misfolded proteins. This Morus indica (Mulberry) protein is ATP-dependent Clp protease proteolytic subunit.